The chain runs to 198 residues: Urease accessory protein UreE (198 aa).

The segment at A137 to D198 is disordered. Over residues H149–D198 the composition is skewed to basic and acidic residues.

Belongs to the UreE family.

The protein localises to the cytoplasm. Involved in urease metallocenter assembly. Binds nickel. Probably functions as a nickel donor during metallocenter assembly. This chain is Urease accessory protein UreE, found in Rhizobium johnstonii (strain DSM 114642 / LMG 32736 / 3841) (Rhizobium leguminosarum bv. viciae).